The primary structure comprises 198 residues: Holliday junction branch migration complex subunit RuvA (198 aa).

A domain I region spans residues 1 to 63 (MYDYIKGQLT…EDAQLLFGFH (63 aa)). Residues 64–142 (SEEEKDVFLK…EAPKEESSKP (79 aa)) are domain II. The tract at residues 143–147 (PKAKQ) is flexible linker. The segment at 148–198 (QGNEQLDEAVEALLALGYKATELKKIRAFFEGTSETAEQYIKSALKMLMKG) is domain III.

It belongs to the RuvA family. In terms of assembly, homotetramer. Forms an RuvA(8)-RuvB(12)-Holliday junction (HJ) complex. HJ DNA is sandwiched between 2 RuvA tetramers; dsDNA enters through RuvA and exits via RuvB. An RuvB hexamer assembles on each DNA strand where it exits the tetramer. Each RuvB hexamer is contacted by two RuvA subunits (via domain III) on 2 adjacent RuvB subunits; this complex drives branch migration. In the full resolvosome a probable DNA-RuvA(4)-RuvB(12)-RuvC(2) complex forms which resolves the HJ.

The protein resides in the cytoplasm. The RuvA-RuvB-RuvC complex processes Holliday junction (HJ) DNA during genetic recombination and DNA repair, while the RuvA-RuvB complex plays an important role in the rescue of blocked DNA replication forks via replication fork reversal (RFR). RuvA specifically binds to HJ cruciform DNA, conferring on it an open structure. The RuvB hexamer acts as an ATP-dependent pump, pulling dsDNA into and through the RuvAB complex. HJ branch migration allows RuvC to scan DNA until it finds its consensus sequence, where it cleaves and resolves the cruciform DNA. This chain is Holliday junction branch migration complex subunit RuvA, found in Streptococcus equi subsp. zooepidemicus (strain H70).